Reading from the N-terminus, the 1388-residue chain is DNA-directed RNA polymerase subunit beta' (1388 aa).

Zn(2+) contacts are provided by cysteine 76, cysteine 78, cysteine 91, and cysteine 94. Residues aspartate 467, aspartate 469, and aspartate 471 each coordinate Mg(2+). The Zn(2+) site is built by cysteine 810, cysteine 884, cysteine 891, and cysteine 894.

This sequence belongs to the RNA polymerase beta' chain family. The RNAP catalytic core consists of 2 alpha, 1 beta, 1 beta' and 1 omega subunit. When a sigma factor is associated with the core the holoenzyme is formed, which can initiate transcription. Mg(2+) is required as a cofactor. The cofactor is Zn(2+).

It catalyses the reaction RNA(n) + a ribonucleoside 5'-triphosphate = RNA(n+1) + diphosphate. Its function is as follows. DNA-dependent RNA polymerase catalyzes the transcription of DNA into RNA using the four ribonucleoside triphosphates as substrates. This is DNA-directed RNA polymerase subunit beta' from Lawsonia intracellularis (strain PHE/MN1-00).